Here is a 397-residue protein sequence, read N- to C-terminus: Tryptophan synthase beta chain (397 aa).

Lysine 91 bears the N6-(pyridoxal phosphate)lysine mark.

Belongs to the TrpB family. In terms of assembly, tetramer of two alpha and two beta chains. It depends on pyridoxal 5'-phosphate as a cofactor.

It carries out the reaction (1S,2R)-1-C-(indol-3-yl)glycerol 3-phosphate + L-serine = D-glyceraldehyde 3-phosphate + L-tryptophan + H2O. Its pathway is amino-acid biosynthesis; L-tryptophan biosynthesis; L-tryptophan from chorismate: step 5/5. Functionally, the beta subunit is responsible for the synthesis of L-tryptophan from indole and L-serine. The chain is Tryptophan synthase beta chain from Bacillus cereus (strain AH187).